A 283-amino-acid polypeptide reads, in one-letter code: MAITAAQVKELRDRTGAGMMDCKNALTETNGDMELAIDNMRKSGAAKAAKKAGNIAADGTILIKNGEGFAALLEVNCQTDFVAKDSNFLAFANAVLDAAAASKVTLEDLKAQFEDARVALVTKIGENINIRRVEYIDGANLSSYRHGERIGVVVAGEADEETLKHIAMHVAASKPEYVNPEDVPAEIVAREQALQIEMSMNEGKSAEIAEKMVLGRMKKFTGEISLTGQAYIMEPKKTVGEILKEKGAKVTNFIRLEVGEGIEKKEEDFAAEVAAQIAASKKA.

The interval 79–82 (TDFV) is involved in Mg(2+) ion dislocation from EF-Tu.

This sequence belongs to the EF-Ts family.

It localises to the cytoplasm. In terms of biological role, associates with the EF-Tu.GDP complex and induces the exchange of GDP to GTP. It remains bound to the aminoacyl-tRNA.EF-Tu.GTP complex up to the GTP hydrolysis stage on the ribosome. The polypeptide is Elongation factor Ts (Shewanella baltica (strain OS155 / ATCC BAA-1091)).